We begin with the raw amino-acid sequence, 434 residues long: Serine/threonine transporter SstT (434 aa).

A run of 9 helical transmembrane segments spans residues 14-34 (IVIGIIVGAVLGVMVPSWSFI), 41-61 (FVGALKAIAPLLVFLLIMSAI), 72-92 (FGTVIVLYLSATLFSSIAAVA), 135-155 (ALVEGNYLAILFWSLLIGSGL), 172-192 (TVSAVAQNVIQFAPFGIVGLL), 210-230 (LLMLLVATMVFVYLVVYPFMV), 282-302 (ISIPLGGSANSGGAAITVSIM), 316-336 (IFLALLLCFLSAISATGVSGI), and 351-371 (FGISNDIAMQVVGIGFIIGVV). Residues 414-434 (KGTAEVVTPEKANEAEESEQV) are disordered.

This sequence belongs to the dicarboxylate/amino acid:cation symporter (DAACS) (TC 2.A.23) family.

It localises to the cell membrane. It catalyses the reaction L-serine(in) + Na(+)(in) = L-serine(out) + Na(+)(out). It carries out the reaction L-threonine(in) + Na(+)(in) = L-threonine(out) + Na(+)(out). Functionally, involved in the import of serine and threonine into the cell, with the concomitant import of sodium (symport system). This chain is Serine/threonine transporter SstT, found in Lacticaseibacillus paracasei (strain ATCC 334 / BCRC 17002 / CCUG 31169 / CIP 107868 / KCTC 3260 / NRRL B-441) (Lactobacillus paracasei).